The following is a 298-amino-acid chain: GTPase Era (298 aa).

The Era-type G domain occupies 4 to 171 (RAGFVALIGR…KEKIVSFLPE (168 aa)). Residues 12 to 19 (GRTNVGKS) are G1. 12 to 19 (GRTNVGKS) lines the GTP pocket. The G2 stretch occupies residues 38–42 (QTTRN). A G3 region spans residues 59 to 62 (DTPG). GTP-binding positions include 59–63 (DTPGI) and 121–124 (NKID). A G4 region spans residues 121-124 (NKID). A G5 region spans residues 150-152 (ISA). One can recognise a KH type-2 domain in the interval 202-280 (LEEEVPHGVY…FLQLWVKVRK (79 aa)).

This sequence belongs to the TRAFAC class TrmE-Era-EngA-EngB-Septin-like GTPase superfamily. Era GTPase family. Monomer.

The protein resides in the cytoplasm. The protein localises to the cell membrane. In terms of biological role, an essential GTPase that binds both GDP and GTP, with rapid nucleotide exchange. Plays a role in 16S rRNA processing and 30S ribosomal subunit biogenesis and possibly also in cell cycle regulation and energy metabolism. This Caldanaerobacter subterraneus subsp. tengcongensis (strain DSM 15242 / JCM 11007 / NBRC 100824 / MB4) (Thermoanaerobacter tengcongensis) protein is GTPase Era.